The chain runs to 329 residues: Malate dehydrogenase (329 aa).

An NAD(+)-binding site is contributed by 13–19 (GAAGNIS). Substrate contacts are provided by Arg-94 and Arg-100. NAD(+) contacts are provided by residues Asn-107, Gln-114, and 131 to 133 (VGN). Substrate-binding residues include Asn-133 and Arg-164. The active-site Proton acceptor is the His-189.

This sequence belongs to the LDH/MDH superfamily. MDH type 2 family.

The enzyme catalyses (S)-malate + NAD(+) = oxaloacetate + NADH + H(+). Functionally, catalyzes the reversible oxidation of malate to oxaloacetate. This Psychrobacter cryohalolentis (strain ATCC BAA-1226 / DSM 17306 / VKM B-2378 / K5) protein is Malate dehydrogenase.